Reading from the N-terminus, the 67-residue chain is UPF0337 protein CC_0938 (67 aa).

The interval 37–67 (AAQKAKGDLQNKVGKAQDKARRRDQALNARL) is disordered. The span at 41–61 (AKGDLQNKVGKAQDKARRRDQ) shows a compositional bias: basic and acidic residues.

This sequence belongs to the UPF0337 (CsbD) family.

The protein is UPF0337 protein CC_0938 of Caulobacter vibrioides (strain ATCC 19089 / CIP 103742 / CB 15) (Caulobacter crescentus).